The sequence spans 174 residues: Gamma-crystallin D (174 aa).

Beta/gamma crystallin 'Greek key' domains follow at residues 2 to 40 and 41 to 83; these read GKITFYEDRGFQGRHYECSSDHSNLQPYLGRCNSVRVDS and GCWM…RLIP. The interval 84 to 87 is connecting peptide; sequence HAGS. 2 Beta/gamma crystallin 'Greek key' domains span residues 88–128 and 129–171; these read HRLR…NVLE and GSWV…RRVI.

The protein belongs to the beta/gamma-crystallin family.

Its function is as follows. Crystallins are the dominant structural components of the vertebrate eye lens. This chain is Gamma-crystallin D (CRYGD), found in Bos taurus (Bovine).